A 221-amino-acid chain; its full sequence is Ribosomal RNA small subunit methyltransferase G (221 aa).

S-adenosyl-L-methionine-binding residues include glycine 78, phenylalanine 83, and arginine 150.

This sequence belongs to the methyltransferase superfamily. RNA methyltransferase RsmG family.

Its subcellular location is the cytoplasm. Functionally, specifically methylates the N7 position of a guanine in 16S rRNA. The sequence is that of Ribosomal RNA small subunit methyltransferase G from Bifidobacterium longum (strain DJO10A).